A 72-amino-acid polypeptide reads, in one-letter code: UPF0352 protein CGSHiGG_07710 (72 aa).

Belongs to the UPF0352 family.

The polypeptide is UPF0352 protein CGSHiGG_07710 (Haemophilus influenzae (strain PittGG)).